The following is a 208-amino-acid chain: Protein GrpE (208 aa).

Residues 1–25 (MVDNKDFNEELKENIQEELDNETKA) are compositionally biased toward basic and acidic residues. The interval 1-38 (MVDNKDFNEELKENIQEELDNETKAENPNIDEEVEEVS) is disordered. Residues 29 to 38 (NIDEEVEEVS) are compositionally biased toward acidic residues.

It belongs to the GrpE family. Homodimer.

It is found in the cytoplasm. Functionally, participates actively in the response to hyperosmotic and heat shock by preventing the aggregation of stress-denatured proteins, in association with DnaK and GrpE. It is the nucleotide exchange factor for DnaK and may function as a thermosensor. Unfolded proteins bind initially to DnaJ; upon interaction with the DnaJ-bound protein, DnaK hydrolyzes its bound ATP, resulting in the formation of a stable complex. GrpE releases ADP from DnaK; ATP binding to DnaK triggers the release of the substrate protein, thus completing the reaction cycle. Several rounds of ATP-dependent interactions between DnaJ, DnaK and GrpE are required for fully efficient folding. This chain is Protein GrpE, found in Clostridium perfringens (strain 13 / Type A).